The chain runs to 372 residues: Cytochrome b (372 aa).

4 helical membrane passes run 25–45 (FGSM…FLSM), 69–90 (WMMQ…YIHV), 105–125 (WLSG…GYVL), and 170–190 (FFAL…LHIM). 2 residues coordinate heme b: His75 and His89. 2 residues coordinate heme b: His174 and His188. His193 lines the a ubiquinone pocket. The next 4 membrane-spanning stretches (helical) occupy residues 218–238 (YKDL…ISFI), 280–300 (LGGA…PFTH), 312–332 (FMQL…WTAT), and 339–358 (YTMI…MSNP).

Belongs to the cytochrome b family. As to quaternary structure, the cytochrome bc1 complex contains 3 respiratory subunits (MT-CYB, CYC1 and UQCRFS1), 2 core proteins (UQCRC1 and UQCRC2) and probably 6 low-molecular weight proteins. The cofactor is heme b.

The protein localises to the mitochondrion inner membrane. Functionally, component of the ubiquinol-cytochrome c reductase complex (complex III or cytochrome b-c1 complex) that is part of the mitochondrial respiratory chain. The b-c1 complex mediates electron transfer from ubiquinol to cytochrome c. Contributes to the generation of a proton gradient across the mitochondrial membrane that is then used for ATP synthesis. In Acrantophis dumerili (Dumeril's ground boa), this protein is Cytochrome b (MT-CYB).